A 388-amino-acid chain; its full sequence is Succinate--CoA ligase [ADP-forming] subunit beta (388 aa).

The ATP-grasp domain maps to 9–244 (KQLFADYGLP…PSQEDPREAH (236 aa)). ATP is bound by residues lysine 46, 53–55 (GRG), glutamate 99, threonine 102, and glutamate 107. Positions 199 and 213 each coordinate Mg(2+). Residues asparagine 264 and 321–323 (GIV) each bind substrate.

It belongs to the succinate/malate CoA ligase beta subunit family. Heterotetramer of two alpha and two beta subunits. Requires Mg(2+) as cofactor.

It catalyses the reaction succinate + ATP + CoA = succinyl-CoA + ADP + phosphate. It carries out the reaction GTP + succinate + CoA = succinyl-CoA + GDP + phosphate. It participates in carbohydrate metabolism; tricarboxylic acid cycle; succinate from succinyl-CoA (ligase route): step 1/1. Succinyl-CoA synthetase functions in the citric acid cycle (TCA), coupling the hydrolysis of succinyl-CoA to the synthesis of either ATP or GTP and thus represents the only step of substrate-level phosphorylation in the TCA. The beta subunit provides nucleotide specificity of the enzyme and binds the substrate succinate, while the binding sites for coenzyme A and phosphate are found in the alpha subunit. The sequence is that of Succinate--CoA ligase [ADP-forming] subunit beta from Hahella chejuensis (strain KCTC 2396).